A 1274-amino-acid polypeptide reads, in one-letter code: Spike glycoprotein (1274 aa).

The N-terminal stretch at 1–11 (MLLILVLGVSL) is a signal peptide. Residues 12–1212 (AAASRPECFN…NVYEKTIKWP (1201 aa)) lie on the Extracellular side of the membrane. The BetaCoV S1-NTD domain occupies 15–325 (SRPECFNPRF…SAAEELYCVT (311 aa)). Disulfide bonds link C19–C169 and C163–C196. N-linked (GlcNAc...) asparagine; by host glycosylation is found at N30, N34, N90, N154, N165, N199, N205, and N304. Cystine bridges form between C313–C323, C357–C381, C399–C452, and C411–C517. The BetaCoV S1-CTD domain occupies 355-519 (SYCTPPYSVL…AAGSKLVCPV (165 aa)). N423, N459, N521, N547, N572, N644, N663, N688, N705, and N791 each carry an N-linked (GlcNAc...) asparagine; by host glycan. Fusion peptide stretches follow at residues 810–831 (SAFSDLLYDKVRITDPGFMQSY) and 829–852 (QSYQKCIDSQWGGSIRDLLCTQTY). A disulfide bridge links C834 with C848. The heptad repeat 1 stretch occupies residues 917–967 (QKLIASSFNNALVNIQKGFTETSIALSKMQDVINQHAAQLHTLVVQLGNSF). The stretch at 946 to 990 (QDVINQHAAQLHTLVVQLGNSFGAISSSINEIFSRLEGLAANAEV) forms a coiled coil. 10 N-linked (GlcNAc...) asparagine; by host glycosylation sites follow: N1042, N1081, N1096, N1113, N1128, N1133, N1157, N1163, N1172, and N1193. Residues 1162 to 1201 (FNNTFNPNDFNFSTVDVTAQIKSLHDVVNQLNQSFIDLKK) are heptad repeat 2. Residues 1174–1202 (STVDVTAQIKSLHDVVNQLNQSFIDLKKL) are a coiled coil. The helical transmembrane segment at 1213-1233 (WYVWLAMIAGIVGLVLAVIML) threads the bilayer. Residues 1234–1274 (MCMTNCCSCFKGMCDCRRCCGSYDSYDDVYPAVRVNKKRTV) lie on the Cytoplasmic side of the membrane. The KxHxx motif lies at 1273–1274 (TV).

The protein belongs to the betacoronaviruses spike protein family. In terms of assembly, homotrimer; each monomer consists of a S1 and a S2 subunit. The resulting peplomers protrude from the virus surface as spikes. In terms of processing, specific enzymatic cleavages in vivo yield mature proteins. The precursor is processed into S1 and S2 by host cell furin or another cellular protease to yield the mature S1 and S2 proteins. Additionally, a second cleavage leads to the release of a fusion peptide after viral attachment to host cell receptor. Post-translationally, the cytoplasmic Cys-rich domain is palmitoylated. Spike glycoprotein is digested within host endosomes.

Its subcellular location is the virion membrane. The protein resides in the host endoplasmic reticulum-Golgi intermediate compartment membrane. It is found in the host cell membrane. In terms of biological role, attaches the virion to the cell membrane by interacting with host receptor, initiating the infection. Functionally, mediates fusion of the virion and cellular membranes by acting as a class I viral fusion protein. Under the current model, the protein has at least three conformational states: pre-fusion native state, pre-hairpin intermediate state, and post-fusion hairpin state. During viral and target cell membrane fusion, the coiled coil regions (heptad repeats) assume a trimer-of-hairpins structure, positioning the fusion peptide in close proximity to the C-terminal region of the ectodomain. The formation of this structure appears to drive apposition and subsequent fusion of viral and target cell membranes. Acts as a viral fusion peptide which is unmasked following S2 cleavage occurring upon virus endocytosis. In Rousettus leschenaultii (Leschenault's rousette), this protein is Spike glycoprotein.